A 240-amino-acid chain; its full sequence is uncharacterized protein (240 aa).

This sequence to H.influenzae HI_0575.

This is an uncharacterized protein from Escherichia coli (strain K12).